The following is a 492-amino-acid chain: Protein nucleotidyltransferase YdiU (492 aa).

Residues Gly-95, Gly-97, Arg-98, Lys-118, Asp-130, Gly-131, Arg-181, and Arg-188 each coordinate ATP. The active-site Proton acceptor is Asp-257. The Mg(2+) site is built by Asn-258 and Asp-267. Residue Asp-267 coordinates ATP. The segment covering 466–475 (YDDQPEHAEY) has biased composition (basic and acidic residues). The disordered stretch occupies residues 466–492 (YDDQPEHAEYRQPPPPSEKPYQTFCGT).

This sequence belongs to the SELO family. The cofactor is Mg(2+). It depends on Mn(2+) as a cofactor.

It catalyses the reaction L-seryl-[protein] + ATP = 3-O-(5'-adenylyl)-L-seryl-[protein] + diphosphate. It carries out the reaction L-threonyl-[protein] + ATP = 3-O-(5'-adenylyl)-L-threonyl-[protein] + diphosphate. The enzyme catalyses L-tyrosyl-[protein] + ATP = O-(5'-adenylyl)-L-tyrosyl-[protein] + diphosphate. The catalysed reaction is L-histidyl-[protein] + UTP = N(tele)-(5'-uridylyl)-L-histidyl-[protein] + diphosphate. It catalyses the reaction L-seryl-[protein] + UTP = O-(5'-uridylyl)-L-seryl-[protein] + diphosphate. It carries out the reaction L-tyrosyl-[protein] + UTP = O-(5'-uridylyl)-L-tyrosyl-[protein] + diphosphate. Nucleotidyltransferase involved in the post-translational modification of proteins. It can catalyze the addition of adenosine monophosphate (AMP) or uridine monophosphate (UMP) to a protein, resulting in modifications known as AMPylation and UMPylation. The polypeptide is Protein nucleotidyltransferase YdiU (Syntrophotalea carbinolica (strain DSM 2380 / NBRC 103641 / GraBd1) (Pelobacter carbinolicus)).